A 253-amino-acid polypeptide reads, in one-letter code: FGFR1 oncogene partner 2 homolog (253 aa).

Positions 5-104 (IEKALADAKA…SALELIMSKY (100 aa)) form a coiled coil. A Phosphoserine modification is found at Ser-140. Residues 160–223 (LERRHLEANQ…LREILQITRE (64 aa)) are a coiled coil. The disordered stretch occupies residues 231–253 (DDASESTSLSALVTNSDLSLRKS). Over residues 235 to 253 (ESTSLSALVTNSDLSLRKS) the composition is skewed to polar residues.

The protein belongs to the SIKE family.

It localises to the cytoplasm. In terms of biological role, may be involved in wound healing pathway. In Mus musculus (Mouse), this protein is FGFR1 oncogene partner 2 homolog (Fgfr1op2).